We begin with the raw amino-acid sequence, 278 residues long: Pantothenate synthetase (278 aa).

M27–H34 serves as a coordination point for ATP. The active-site Proton donor is H34. Q58 lines the (R)-pantoate pocket. A beta-alanine-binding site is contributed by Q58. G147–D150 serves as a coordination point for ATP. Q153 lines the (R)-pantoate pocket. Y184–R187 is a binding site for ATP.

This sequence belongs to the pantothenate synthetase family. As to quaternary structure, homodimer.

It localises to the cytoplasm. It catalyses the reaction (R)-pantoate + beta-alanine + ATP = (R)-pantothenate + AMP + diphosphate + H(+). It participates in cofactor biosynthesis; (R)-pantothenate biosynthesis; (R)-pantothenate from (R)-pantoate and beta-alanine: step 1/1. In terms of biological role, catalyzes the condensation of pantoate with beta-alanine in an ATP-dependent reaction via a pantoyl-adenylate intermediate. In Acidithiobacillus ferrooxidans (strain ATCC 23270 / DSM 14882 / CIP 104768 / NCIMB 8455) (Ferrobacillus ferrooxidans (strain ATCC 23270)), this protein is Pantothenate synthetase.